The following is a 1158-amino-acid chain: ATP-dependent helicase/deoxyribonuclease subunit B (1158 aa).

Positions 1–275 (MTLHAYLGRA…QYFNQLYRFN (275 aa)) constitute a UvrD-like helicase ATP-binding domain. Position 8–15 (8–15 (GRAGTGKS)) interacts with ATP. Residues 269–583 (NQLYRFNNQD…SIGTMDLAKV (315 aa)) enclose the UvrD-like helicase C-terminal domain. Residues cysteine 784, cysteine 1112, cysteine 1115, and cysteine 1121 each coordinate [4Fe-4S] cluster.

It belongs to the helicase family. AddB/RexB type 1 subfamily. In terms of assembly, heterodimer of AddA and AddB. Mg(2+) is required as a cofactor. [4Fe-4S] cluster serves as cofactor.

The heterodimer acts as both an ATP-dependent DNA helicase and an ATP-dependent, dual-direction single-stranded exonuclease. Recognizes the chi site generating a DNA molecule suitable for the initiation of homologous recombination. The AddB subunit has 5' -&gt; 3' nuclease activity but not helicase activity. The sequence is that of ATP-dependent helicase/deoxyribonuclease subunit B from Staphylococcus aureus (strain USA300).